A 694-amino-acid chain; its full sequence is MAKPLQFAPFISEIELPFYSALFASKLDHDKLDDSARSVLGLYEPRSEEPESSCRLQILGNALTSGKTNEPSSPLATMRAEGIIRNVNTLEDFKNTDKPAMLRTAGRQVWDAIKDGSIYSVPSLLSSFIILSYADLKKYKFTYWFAFPALHSDPVWKRSGPAERLTSQETTALVDRVGTWRYSVDARERGFFLAKKVPGRRETDDPDTPQELPFHWEIGSLRDFETGFFDQVPEEDRYVAFTDPSTYPEAPGWPLRNFLILIRHRFRLTKTKVICYRDTWAKRHEAKSVILTIEMDPVENLDITEMPKVTGWARSSNGKLQAQQVNLGEYMDPARLADSSVDLNLKLMKWRIAPNLNLETIKNTKCLLLGAGTLGSYVSRNLMGWGVRKITFVDYGRVSFSNPVRQPLFNFNDCLEGGKPKALRAAEALKEIYPGVDSEGHALSVPMLGHPFTDETKTKEDYQKLEKLINEHDAIFLLMDSRESRWLPTVMGKAAGKIVMNAALGFDSYVVMRHGAETSPEGQTPLGCYFCNDVVAPADSQKDQTLDQQCTVTRPGVAPIASALLVELLTSLLQHPLGKDAPAPQPTSGVIPERDPPDHALGLVPHQIRGYTSTFQQIVIRGQSYDCCSACSPKILNAYRHDGWGFVKRALQEKEYVAELSGLAEVQRRAEEMAAHVDWEEDDDLVDDGEGELI.

Residues 370-375 (GAGTLG) carry the GXGXXG motif motif. The Glycyl thioester intermediate role is filled by C550. The interval 650-689 (ALQEKEYVAELSGLAEVQRRAEEMAAHVDWEEDDDLVDDG) is homodimerization.

It belongs to the ATG7 family. In terms of assembly, homodimer. Interacts with ATG8 through a thioester bond between Cys-550 and the C-terminal 'Gly-116' of ATG8 and with ATG12 through a thioester bond between Cys-550 and the C-terminal 'Gly-160' of ATG12. Also interacts with ATG3.

It is found in the cytoplasm. The protein localises to the preautophagosomal structure. Its function is as follows. E1-like activating enzyme involved in the 2 ubiquitin-like systems required for cytoplasm to vacuole transport (Cvt) and autophagy. Activates ATG12 for its conjugation with ATG5 and ATG8 for its conjugation with phosphatidylethanolamine. Both systems are needed for the ATG8 association to Cvt vesicles and autophagosomes membranes. Autophagy is essential for maintenance of amino acid levels and protein synthesis under nitrogen starvation. Required for selective autophagic degradation of the nucleus (nucleophagy) as well as for mitophagy which contributes to regulate mitochondrial quantity and quality by eliminating the mitochondria to a basal level to fulfill cellular energy requirements and preventing excess ROS production. Autophagy is required for proper vegetative growth, asexual/sexual reproduction, and full virulence. Autophagy is particularly involved in the biosynthesis of deoxynivalenol (DON), an important virulence determinant. This is Ubiquitin-like modifier-activating enzyme ATG7 from Gibberella zeae (strain ATCC MYA-4620 / CBS 123657 / FGSC 9075 / NRRL 31084 / PH-1) (Wheat head blight fungus).